A 607-amino-acid polypeptide reads, in one-letter code: NADH-ubiquinone oxidoreductase chain 5 (607 aa).

16 helical membrane passes run 3–23, 35–55, 84–104, 117–137, 140–160, 171–191, 210–230, 241–261, 272–292, 301–320, 324–344, 365–385, 405–427, 457–477, 482–502, and 586–606; these read IFTT…LISM, YTTT…LMFF, FFSI…MQFS, FIKY…ANNM, LFIG…WWYG, AILY…WFSL, LIPL…FGLH, TPVS…FLLV, FILT…AICA, IIAF…LGMN, LAFL…MCSG, IMPF…GMPF, NAWA…MRII, LAFG…PTSI, MPWF…LIAL, and LYFM…SINL.

The protein belongs to the complex I subunit 5 family. As to quaternary structure, core subunit of respiratory chain NADH dehydrogenase (Complex I) which is composed of 45 different subunits.

The protein localises to the mitochondrion inner membrane. The enzyme catalyses a ubiquinone + NADH + 5 H(+)(in) = a ubiquinol + NAD(+) + 4 H(+)(out). In terms of biological role, core subunit of the mitochondrial membrane respiratory chain NADH dehydrogenase (Complex I) which catalyzes electron transfer from NADH through the respiratory chain, using ubiquinone as an electron acceptor. Essential for the catalytic activity and assembly of complex I. This is NADH-ubiquinone oxidoreductase chain 5 (Mtnd5) from Mus musculus (Mouse).